The following is a 387-amino-acid chain: 3-ketoacyl-CoA thiolase (387 aa).

C91 acts as the Acyl-thioester intermediate in catalysis. Residues H343 and C373 each act as proton acceptor in the active site.

Belongs to the thiolase-like superfamily. Thiolase family. As to quaternary structure, heterotetramer of two alpha chains (FadB) and two beta chains (FadA).

It is found in the cytoplasm. The enzyme catalyses an acyl-CoA + acetyl-CoA = a 3-oxoacyl-CoA + CoA. It functions in the pathway lipid metabolism; fatty acid beta-oxidation. Catalyzes the final step of fatty acid oxidation in which acetyl-CoA is released and the CoA ester of a fatty acid two carbons shorter is formed. Involved in the aerobic and anaerobic degradation of long-chain fatty acids. The chain is 3-ketoacyl-CoA thiolase from Escherichia coli O6:H1 (strain CFT073 / ATCC 700928 / UPEC).